The sequence spans 252 residues: Imidazole glycerol phosphate synthase subunit HisF (252 aa).

Residues aspartate 11 and aspartate 130 contribute to the active site.

It belongs to the HisA/HisF family. In terms of assembly, heterodimer of HisH and HisF.

It is found in the cytoplasm. It catalyses the reaction 5-[(5-phospho-1-deoxy-D-ribulos-1-ylimino)methylamino]-1-(5-phospho-beta-D-ribosyl)imidazole-4-carboxamide + L-glutamine = D-erythro-1-(imidazol-4-yl)glycerol 3-phosphate + 5-amino-1-(5-phospho-beta-D-ribosyl)imidazole-4-carboxamide + L-glutamate + H(+). It functions in the pathway amino-acid biosynthesis; L-histidine biosynthesis; L-histidine from 5-phospho-alpha-D-ribose 1-diphosphate: step 5/9. In terms of biological role, IGPS catalyzes the conversion of PRFAR and glutamine to IGP, AICAR and glutamate. The HisF subunit catalyzes the cyclization activity that produces IGP and AICAR from PRFAR using the ammonia provided by the HisH subunit. In Bacillus cereus (strain ZK / E33L), this protein is Imidazole glycerol phosphate synthase subunit HisF.